A 466-amino-acid polypeptide reads, in one-letter code: Adenylosuccinate lyase (466 aa).

Residues 21–22 (RY), 97–99 (NHD), and 130–131 (TS) each bind substrate. The active-site Proton donor/acceptor is His180. Gln259 is a substrate binding site. Ser307 functions as the Proton donor/acceptor in the catalytic mechanism. Substrate is bound by residues Arg347, Ser352, and Arg356.

It belongs to the lyase 1 family. Adenylosuccinate lyase subfamily. As to quaternary structure, homotetramer. Residues from neighboring subunits contribute catalytic and substrate-binding residues to each active site.

It carries out the reaction N(6)-(1,2-dicarboxyethyl)-AMP = fumarate + AMP. The enzyme catalyses (2S)-2-[5-amino-1-(5-phospho-beta-D-ribosyl)imidazole-4-carboxamido]succinate = 5-amino-1-(5-phospho-beta-D-ribosyl)imidazole-4-carboxamide + fumarate. It participates in purine metabolism; AMP biosynthesis via de novo pathway; AMP from IMP: step 2/2. It functions in the pathway purine metabolism; IMP biosynthesis via de novo pathway; 5-amino-1-(5-phospho-D-ribosyl)imidazole-4-carboxamide from 5-amino-1-(5-phospho-D-ribosyl)imidazole-4-carboxylate: step 2/2. The sequence is that of Adenylosuccinate lyase (purB) from Dictyostelium discoideum (Social amoeba).